The primary structure comprises 146 residues: VHLTNEEKTAVIGLWGKVNVEEVGGEALGRLLVVYPWTQRFFESFGDLSSPSAIMGNPKVKAHGKKVLNSFSEGLKNLDNLKGTFAKLSELHCDKLHVDPENFRLLGYILLCVLARHFGKEFTPQVQAAYQKVVAGVATALAHKYH.

Valine 1 is subject to N-acetylvaline. The region spanning 2–146 (HLTNEEKTAV…VATALAHKYH (145 aa)) is the Globin domain. Phosphoserine is present on serine 44. Lysine 59 is modified (N6-acetyllysine). Residue histidine 63 coordinates heme b. N6-acetyllysine is present on lysine 82. Residue histidine 92 coordinates heme b. Cysteine 93 carries the S-nitrosocysteine modification. Lysine 144 bears the N6-acetyllysine mark.

It belongs to the globin family. As to quaternary structure, heterotetramer of two alpha chains and two beta chains. Red blood cells.

In terms of biological role, involved in oxygen transport from the lung to the various peripheral tissues. The protein is Hemoglobin subunit beta (HBB) of Lyroderma lyra (Greater Asian false-vampire bat).